The sequence spans 167 residues: Periplasmic nitrate reductase, electron transfer subunit (167 aa).

A signal peptide spans 1-34 (MRRAHRAGERVMMKRFGIALLAVAIAAGASSLTA). The disordered stretch occupies residues 40–65 (GLHGPAPLNDEGPAPPMLPNRNTSER). 8 residues coordinate heme c: His-79, Cys-93, Cys-96, His-97, His-114, Cys-133, Cys-136, and His-137.

This sequence belongs to the NapB family. Component of the periplasmic nitrate reductase NapAB complex composed of NapA and NapB. Binds 2 heme C groups per subunit.

It localises to the periplasm. Electron transfer subunit of the periplasmic nitrate reductase complex NapAB. Receives electrons from the membrane-anchored tetraheme c-type NapC protein and transfers these to NapA subunit, thus allowing electron flow between membrane and periplasm. Essential for periplasmic nitrate reduction with nitrate as the terminal electron acceptor. This is Periplasmic nitrate reductase, electron transfer subunit from Bradyrhizobium japonicum.